A 211-amino-acid chain; its full sequence is Histidine biosynthesis bifunctional protein HisIE (211 aa).

Residues 1–122 (MSFKTAEVSS…DPQEESQMVW (122 aa)) form a phosphoribosyl-AMP cyclohydrolase region. The tract at residues 123-211 (LHQLEQLLAA…VINKLKERHK (89 aa)) is phosphoribosyl-ATP pyrophosphohydrolase.

This sequence in the N-terminal section; belongs to the PRA-CH family. In the C-terminal section; belongs to the PRA-PH family.

The protein localises to the cytoplasm. It carries out the reaction 1-(5-phospho-beta-D-ribosyl)-ATP + H2O = 1-(5-phospho-beta-D-ribosyl)-5'-AMP + diphosphate + H(+). The catalysed reaction is 1-(5-phospho-beta-D-ribosyl)-5'-AMP + H2O = 1-(5-phospho-beta-D-ribosyl)-5-[(5-phospho-beta-D-ribosylamino)methylideneamino]imidazole-4-carboxamide. It functions in the pathway amino-acid biosynthesis; L-histidine biosynthesis; L-histidine from 5-phospho-alpha-D-ribose 1-diphosphate: step 2/9. It participates in amino-acid biosynthesis; L-histidine biosynthesis; L-histidine from 5-phospho-alpha-D-ribose 1-diphosphate: step 3/9. The protein is Histidine biosynthesis bifunctional protein HisIE of Vibrio vulnificus (strain CMCP6).